Consider the following 356-residue polypeptide: Tyrosine recombinase XerS (356 aa).

The region spanning 16-121 (IMPWYVLDYY…ALSSLYKYLT (106 aa)) is the Core-binding (CB) domain. Positions 169–354 (AFLDYVDKEY…VNDEQKNALD (186 aa)) constitute a Tyr recombinase domain. Catalysis depends on residues R210, K234, H306, R309, and H332. The active-site O-(3'-phospho-DNA)-tyrosine intermediate is Y341.

It belongs to the 'phage' integrase family. XerS subfamily.

The protein resides in the cytoplasm. Its activity is regulated as follows. FtsK is required for recombination. Functionally, site-specific tyrosine recombinase, which acts by catalyzing the cutting and rejoining of the recombining DNA molecules. Essential to convert dimers of the bacterial chromosome into monomers to permit their segregation at cell division. The protein is Tyrosine recombinase XerS of Streptococcus pyogenes serotype M18 (strain MGAS8232).